The chain runs to 702 residues: MNSLFASTARGLEELLKTELENLGAVECQVVQGGVHFKGDTRLVYQSLMWSRLASRIMLPLGECKVYSDLDLYLGVQAINWTEMFNPGATFAVHFSGLNDTIRNSQYGAMKVKDAIVDAFTRKNLPRPNVDRDAPDIRVNVWLHKETASIALDLSGDGLHLRGYRDRAGIAPIKETLAAAIVMRSGWQPGTPLLDPMCGSGTLLIEAAMLATDRAPGLHRGRWGFSGWAQHDEAIWQEVKAEAQTRARKGLAEYSSHFYGSDSDARVIQRARTNARLAGIGELITFEVKDVAQLTNPLPKGPYGTVLSNPPYGERLDSEPALIALHSLLGRIMKNQFGGWNLSLFSASPDLLSCLQLRADKQYKAKNGPLDCVQKNYHVAESTPDSKPAMVAEDYANRLRKNLKKFEKWARQEGIECYRLYDADLPEYNVAVDRYADWVVVQEYAPPKTIDAHKARQRLFDIIAATISVLGIAPNKLVLKTRERQKGKNQYQKLGEKGEFLEVTEYNAHLLVNLTDYLDTGLFLDHRIARRMLGQMSKGKDFLNLFSYTGSATVHAGLGGARSTTTVDMSRTYLEWAERNLRLNGLTGRAHRLIQADCLAWLREANEQFDLIFIDPPTFSNSKRMEDAFDVQRDHLALMKDLKRLLRAGGTIMFSNNKRGFRMDLDGLAKLGLKAQEITQKTLSQDFARNRQIHNCWLITAA.

Positions 43–154 (LVYQSLMWSR…KETASIALDL (112 aa)) constitute a THUMP domain.

The protein belongs to the methyltransferase superfamily. RlmKL family.

The protein resides in the cytoplasm. The enzyme catalyses guanosine(2445) in 23S rRNA + S-adenosyl-L-methionine = N(2)-methylguanosine(2445) in 23S rRNA + S-adenosyl-L-homocysteine + H(+). It carries out the reaction guanosine(2069) in 23S rRNA + S-adenosyl-L-methionine = N(2)-methylguanosine(2069) in 23S rRNA + S-adenosyl-L-homocysteine + H(+). Its function is as follows. Specifically methylates the guanine in position 2445 (m2G2445) and the guanine in position 2069 (m7G2069) of 23S rRNA. The chain is Ribosomal RNA large subunit methyltransferase K/L from Escherichia coli O139:H28 (strain E24377A / ETEC).